The following is an 862-amino-acid chain: Putative PIP5K1A and PSMD4-like protein (862 aa).

One can recognise a PIPK domain in the interval 28–396 (TSSALKGAIQ…WFQRFMCNTV (369 aa)). Disordered regions lie at residues 404 to 424 (PSPS…GSSG) and 453 to 481 (HLGC…PSFS). Over residues 412-424 (SGSSFSQRAGSSG) the composition is skewed to low complexity. The 184-residue stretch at 490-673 (MLTTSVDNSE…LADALISFPI (184 aa)) folds into the VWFA domain. In terms of domain architecture, UIM 1 spans 696–715 (SADPELALVLRVFMEEQRQR). Residues 716–740 (QEEEARQAAAASAAEAGIATTGTED) form a disordered region. A compositionally biased stretch (low complexity) spans 722-731 (QAAAASAAEA). One can recognise a UIM 2 domain in the interval 766 to 783 (MTEEEKIVCAMQMSLQGA). The tract at residues 826 to 862 (NLPGVDPNNEAIRNAVGSLASQATKDSKKDKKEEDKK) is disordered. Over residues 850 to 862 (KDSKKDKKEEDKK) the composition is skewed to basic and acidic residues.

Testis-specific.

It is found in the cytoplasm. Functionally, has negligible PIP5 kinase activity. Binds to ubiquitinated proteins. The polypeptide is Putative PIP5K1A and PSMD4-like protein (PIPSL) (Homo sapiens (Human)).